Reading from the N-terminus, the 254-residue chain is 3-deoxy-manno-octulosonate cytidylyltransferase (254 aa).

Belongs to the KdsB family.

It is found in the cytoplasm. The catalysed reaction is 3-deoxy-alpha-D-manno-oct-2-ulosonate + CTP = CMP-3-deoxy-beta-D-manno-octulosonate + diphosphate. It functions in the pathway nucleotide-sugar biosynthesis; CMP-3-deoxy-D-manno-octulosonate biosynthesis; CMP-3-deoxy-D-manno-octulosonate from 3-deoxy-D-manno-octulosonate and CTP: step 1/1. It participates in bacterial outer membrane biogenesis; lipopolysaccharide biosynthesis. In terms of biological role, activates KDO (a required 8-carbon sugar) for incorporation into bacterial lipopolysaccharide in Gram-negative bacteria. The sequence is that of 3-deoxy-manno-octulosonate cytidylyltransferase from Chlamydia caviae (strain ATCC VR-813 / DSM 19441 / 03DC25 / GPIC) (Chlamydophila caviae).